Consider the following 599-residue polypeptide: Protein ref(2)P (599 aa).

The PB1 domain maps to 3 to 88 (EKLLKITYQG…CESNMHVQVA (86 aa)). The segment at 122-173 (HDSVQCDGCGLAPLIGFRYKCVQCSNFDLCQKCESAHKHPEHLMLRMPTNNG) adopts a ZZ-type zinc-finger fold. Zn(2+) contacts are provided by cysteine 127, cysteine 130, cysteine 142, cysteine 145, cysteine 151, cysteine 154, histidine 160, and histidine 163. 4 disordered regions span residues 192–225 (RRSRGHCPFQEASQPAPAAEPARDSRRERRHARR), 245–319 (TTAT…INLD), 357–453 (GIFA…LDPE), and 507–544 (ASANTQTAQVDTVSTSTSTTSVTTNSVGTSPAAPDDKR). Low complexity predominate over residues 199–211 (PFQEASQPAPAAE). Over residues 276–286 (KATESEAKPTE) the composition is skewed to basic and acidic residues. Over residues 291–319 (NTDQSVPTTEDPVTTPRSTEPTTPVINLD) the composition is skewed to polar residues. Residues 375–411 (QSQSSGQSAASSASQSAVPSAAPSANQSNVPSANQSA) are compositionally biased toward low complexity. A run of 3 repeats spans residues 386–393 (SASQSAVP), 399–406 (ANQSNVPS), and 407–413 (ANQSATP). The segment at 386 to 413 (SASQSAVPSAAPSANQSNVPSANQSATP) is 3 X 8 AA repeats of S-A-N-Q-S-X-X-P. Residues 412–423 (TPSISGSISDAQ) are compositionally biased toward polar residues. A compositionally biased stretch (low complexity) spans 511–536 (TQTAQVDTVSTSTSTTSVTTNSVGTS). A UBA domain is found at 550-595 (HTDERINQSIHAMMAMGFSNEGAWLTQLLESVQGNIPAALDVMHVS).

In terms of assembly, interacts with aPKC and Traf6.

It is found in the nucleus. It localises to the cytoplasm. In terms of biological role, required for selective autophagy activation by ubiquitinated proteins. Implicated in sigma rhabdovirus multiplication and necessary for male fertility. Involved in activating transcription of Drs. This is Protein ref(2)P (ref(2)P) from Drosophila simulans (Fruit fly).